The chain runs to 267 residues: Cytochrome b (267 aa).

Helical transmembrane passes span 4-24 (FGSL…LLAA), 48-69 (WLIR…YLHI), 84-104 (WNTG…GYVL), and 149-169 (FFTL…IHLT). Residues H54 and H68 each coordinate heme b. Heme b is bound by residues H153 and H167. Residue H172 participates in a ubiquinone binding. 2 consecutive transmembrane segments (helical) span residues 197-217 (LKDI…ALFA) and 259-267 (LGGVLALAA).

It belongs to the cytochrome b family. The cytochrome bc1 complex contains 11 subunits: 3 respiratory subunits (MT-CYB, CYC1 and UQCRFS1), 2 core proteins (UQCRC1 and UQCRC2) and 6 low-molecular weight proteins (UQCRH/QCR6, UQCRB/QCR7, UQCRQ/QCR8, UQCR10/QCR9, UQCR11/QCR10 and a cleavage product of UQCRFS1). This cytochrome bc1 complex then forms a dimer. Heme b serves as cofactor.

Its subcellular location is the mitochondrion inner membrane. In terms of biological role, component of the ubiquinol-cytochrome c reductase complex (complex III or cytochrome b-c1 complex) that is part of the mitochondrial respiratory chain. The b-c1 complex mediates electron transfer from ubiquinol to cytochrome c. Contributes to the generation of a proton gradient across the mitochondrial membrane that is then used for ATP synthesis. This is Cytochrome b (MT-CYB) from Raphus cucullatus (Dodo).